The primary structure comprises 68 residues: Gallinacin-10 (68 aa).

The signal sequence occupies residues 1-19 (MKILCLLFAVLLFLFQAAP). A propeptide spanning residues 20–25 (GSADPL) is cleaved from the precursor. Disulfide bonds link Cys-32-Cys-61, Cys-39-Cys-54, and Cys-44-Cys-62.

The protein belongs to the beta-defensin family. Strong expression in the testis, liver, gall bladder and kidney. Also expressed in the ovary and male and female reproductive tracts. Expressed in the ovarian stroma and the theca and granulosa layers of the ovarian follicle.

Its subcellular location is the secreted. It localises to the cytoplasmic granule. Has bactericidal activity. The polypeptide is Gallinacin-10 (GAL10) (Gallus gallus (Chicken)).